The primary structure comprises 279 residues: Large ribosomal subunit protein uL2 (279 aa).

Residues 223 to 279 (MAMNPVDHPMGGGEGKSKSGGGRKHPKSPWGQLAKGLKTRNKKKASSKLIVRGRKSK) are disordered. Positions 232–242 (MGGGEGKSKSG) are enriched in gly residues. Basic residues predominate over residues 259 to 279 (LKTRNKKKASSKLIVRGRKSK).

The protein belongs to the universal ribosomal protein uL2 family. Part of the 50S ribosomal subunit. Forms a bridge to the 30S subunit in the 70S ribosome.

Functionally, one of the primary rRNA binding proteins. Required for association of the 30S and 50S subunits to form the 70S ribosome, for tRNA binding and peptide bond formation. It has been suggested to have peptidyltransferase activity; this is somewhat controversial. Makes several contacts with the 16S rRNA in the 70S ribosome. The chain is Large ribosomal subunit protein uL2 from Prosthecochloris aestuarii (strain DSM 271 / SK 413).